Reading from the N-terminus, the 461-residue chain is Fumarate hydratase class II (461 aa).

Substrate is bound by residues 97–99 (SGT), 127–130 (HPND), 137–139 (SSN), and Thr185. Residue His186 is the Proton donor/acceptor of the active site. Residue Ser316 is part of the active site. Residues Ser317 and 322–324 (KVN) each bind substrate.

Belongs to the class-II fumarase/aspartase family. Fumarase subfamily. Homotetramer.

It is found in the cytoplasm. The catalysed reaction is (S)-malate = fumarate + H2O. It functions in the pathway carbohydrate metabolism; tricarboxylic acid cycle; (S)-malate from fumarate: step 1/1. Functionally, involved in the TCA cycle. Catalyzes the stereospecific interconversion of fumarate to L-malate. The protein is Fumarate hydratase class II of Staphylococcus aureus (strain MRSA252).